The sequence spans 1127 residues: Genome polyprotein (1127 aa).

The interaction with host EXOC1 stretch occupies residues 1-15 (MNNQRKKARSTPFNM). The Cytoplasmic segment spans residues 1 to 101 (MNNQRKKARS…LNILNRRRRT (101 aa)). Residues 37 to 72 (MLQGRGPLKLFMALVALPRFLTIPPTAGILKRWGTI) form a hydrophobic; homodimerization of capsid protein C region. Positions 101–114 (TAGVIIMLIPTVMA) are cleaved as a propeptide — ER anchor for the capsid protein C, removed in mature form by serine protease NS3. Residues 102–122 (AGVIIMLIPTVMAFHLTTRNG) form a helical membrane-spanning segment. The Extracellular segment spans residues 123 to 238 (EPHMIVSRQE…GAWKRACRME (116 aa)). An N-linked (GlcNAc...) asparagine; by host glycan is attached at N183. A helical membrane pass occupies residues 239–259 (TWILRHPGFTIMAAILAYTIG). Topologically, residues 260-265 (TTHFQR) are cytoplasmic. A helical membrane pass occupies residues 266–280 (GLILILQTAVAPSMT). Residues 281–725 (MRCIGISNRD…LHQVFGAIYG (445 aa)) are Extracellular-facing. Intrachain disulfides connect C283/C310, C340/C401, C354/C385, and C372/C396. N-linked (GlcNAc...) asparagine; by host glycosylation is present at N347. A fusion peptide region spans residues 378–391 (DRGWGNGCGLFGKG). Residue N433 is glycosylated (N-linked (GlcNAc...) asparagine; by host). 2 disulfides stabilise this stretch: C465/C565 and C582/C613. Residues 726–746 (AAFSGVSWTMKILIGVIITWI) traverse the membrane as a helical segment. At 747 to 754 (GMNSRSTS) the chain is on the cytoplasmic side. The helical transmembrane segment at 755 to 773 (LSVSLVLVGVITLYLGAMV) threads the bilayer. Topologically, residues 774 to 1127 (QADSGCVVSW…ENLVTSLVTA (354 aa)) are extracellular. 5 cysteine pairs are disulfide-bonded: C779-C790, C830-C918, C954-C998, C1055-C1104, and C1066-C1088. 2 N-linked (GlcNAc...) asparagine; by host glycosylation sites follow: N905 and N982.

In terms of assembly, homodimer. Interacts (via N-terminus) with host EXOC1 (via C-terminus); this interaction results in EXOC1 degradation through the proteasome degradation pathway. Forms heterodimers with envelope protein E in the endoplasmic reticulum and Golgi. As to quaternary structure, homodimer; in the endoplasmic reticulum and Golgi. Interacts with protein prM. Interacts with non-structural protein 1. In terms of assembly, homodimer; Homohexamer when secreted. Interacts with envelope protein E. Post-translationally, specific enzymatic cleavages in vivo yield mature proteins. Cleavages in the lumen of endoplasmic reticulum are performed by host signal peptidase, wereas cleavages in the cytoplasmic side are performed by the Serine protease NS3. Signal cleavage at the 2K-4B site requires a prior NS3 protease-mediated cleavage at the 4A-2K site. Cleaved in post-Golgi vesicles by a host furin, releasing the mature small envelope protein M, and peptide pr. This cleavage is incomplete as up to 30% of viral particles still carry uncleaved prM. In terms of processing, N-glycosylated. Post-translationally, N-glycosylated. The excreted form is glycosylated and this is required for efficient secretion of the protein from infected cells.

The protein localises to the virion. The protein resides in the host nucleus. Its subcellular location is the host cytoplasm. It localises to the host perinuclear region. It is found in the secreted. The protein localises to the virion membrane. The protein resides in the host endoplasmic reticulum membrane. Plays a role in virus budding by binding to the cell membrane and gathering the viral RNA into a nucleocapsid that forms the core of a mature virus particle. During virus entry, may induce genome penetration into the host cytoplasm after hemifusion induced by the surface proteins. Can migrate to the cell nucleus where it modulates host functions. Overcomes the anti-viral effects of host EXOC1 by sequestering and degrading the latter through the proteasome degradation pathway. In terms of biological role, inhibits RNA silencing by interfering with host Dicer. Its function is as follows. Prevents premature fusion activity of envelope proteins in trans-Golgi by binding to envelope protein E at pH6.0. After virion release in extracellular space, gets dissociated from E dimers. Functionally, acts as a chaperone for envelope protein E during intracellular virion assembly by masking and inactivating envelope protein E fusion peptide. prM is the only viral peptide matured by host furin in the trans-Golgi network probably to avoid catastrophic activation of the viral fusion activity in acidic GolGi compartment prior to virion release. prM-E cleavage is inefficient, and many virions are only partially matured. These uncleaved prM would play a role in immune evasion. May play a role in virus budding. Exerts cytotoxic effects by activating a mitochondrial apoptotic pathway through M ectodomain. May display a viroporin activity. In terms of biological role, binds to host cell surface receptor and mediates fusion between viral and cellular membranes. Envelope protein is synthesized in the endoplasmic reticulum in the form of heterodimer with protein prM. They play a role in virion budding in the ER, and the newly formed immature particle is covered with 60 spikes composed of heterodimer between precursor prM and envelope protein E. The virion is transported to the Golgi apparatus where the low pH causes dissociation of PrM-E heterodimers and formation of E homodimers. prM-E cleavage is inefficient, and many virions are only partially matured. These uncleaved prM would play a role in immune evasion. Its function is as follows. Involved in immune evasion, pathogenesis and viral replication. Once cleaved off the polyprotein, is targeted to three destinations: the viral replication cycle, the plasma membrane and the extracellular compartment. Essential for viral replication. Required for formation of the replication complex and recruitment of other non-structural proteins to the ER-derived membrane structures. Excreted as a hexameric lipoparticle that plays a role against host immune response. Antagonizing the complement function. Binds to the host macrophages and dendritic cells. Inhibits signal transduction originating from Toll-like receptor 3 (TLR3). Functionally, disrupts the host endothelial glycocalyx layer of host pulmonary microvascular endothelial cells, inducing degradation of sialic acid and shedding of heparan sulfate proteoglycans. NS1 induces expression of sialidases, heparanase, and activates cathepsin L, which activates heparanase via enzymatic cleavage. These effects are probably linked to the endothelial hyperpermeability observed in severe dengue disease. The sequence is that of Genome polyprotein from Dengue virus type 2 (strain China/D2-04) (DENV-2).